An 81-amino-acid chain; its full sequence is Photosystem I iron-sulfur center (81 aa).

4Fe-4S ferredoxin-type domains are found at residues 2 to 31 (SHTVKIYDTCIGCTQCVRACPTDVLEMVPW) and 39 to 68 (IASSPRTEDCVGCKRCETACPTDFLSIRVY). Residues cysteine 11, cysteine 14, cysteine 17, cysteine 21, cysteine 48, cysteine 51, cysteine 54, and cysteine 58 each coordinate [4Fe-4S] cluster.

As to quaternary structure, the cyanobacterial PSI reaction center is composed of one copy each of PsaA,B,C,D,E,F,I,J,K,L,M and X, and forms trimeric complexes. The cofactor is [4Fe-4S] cluster.

The protein localises to the cellular thylakoid membrane. It carries out the reaction reduced [plastocyanin] + hnu + oxidized [2Fe-2S]-[ferredoxin] = oxidized [plastocyanin] + reduced [2Fe-2S]-[ferredoxin]. Its function is as follows. Apoprotein for the two 4Fe-4S centers FA and FB of photosystem I (PSI); essential for photochemical activity. FB is the terminal electron acceptor of PSI, donating electrons to ferredoxin. The C-terminus interacts with PsaA/B/D and helps assemble the protein into the PSI complex. Required for binding of PsaD and PsaE to PSI. PSI is a plastocyanin/cytochrome c6-ferredoxin oxidoreductase, converting photonic excitation into a charge separation, which transfers an electron from the donor P700 chlorophyll pair to the spectroscopically characterized acceptors A0, A1, FX, FA and FB in turn. The protein is Photosystem I iron-sulfur center of Mastigocladus laminosus (Fischerella sp.).